The primary structure comprises 58 residues: Ribulose bisphosphate carboxylase large chain (58 aa).

Positions 1-2 are excised as a propeptide; sequence MS. At P3 the chain carries N-acetylproline. K14 carries the post-translational modification N6,N6,N6-trimethyllysine.

The protein belongs to the RuBisCO large chain family. Type I subfamily. Heterohexadecamer of 8 large chains and 8 small chains.

It is found in the plastid. The protein localises to the chloroplast. It catalyses the reaction 2 (2R)-3-phosphoglycerate + 2 H(+) = D-ribulose 1,5-bisphosphate + CO2 + H2O. The catalysed reaction is D-ribulose 1,5-bisphosphate + O2 = 2-phosphoglycolate + (2R)-3-phosphoglycerate + 2 H(+). RuBisCO catalyzes two reactions: the carboxylation of D-ribulose 1,5-bisphosphate, the primary event in carbon dioxide fixation, as well as the oxidative fragmentation of the pentose substrate in the photorespiration process. Both reactions occur simultaneously and in competition at the same active site. In Euonymus maackii (Maack's spindle tree), this protein is Ribulose bisphosphate carboxylase large chain (rbcL).